The sequence spans 640 residues: Threonine--tRNA ligase (640 aa).

The TGS domain occupies 1-60 (MKITFPDGAVKEFEPGVSTADIAASISPGLKKKALAGKLNGELLDLVTPIHEDGAIEIVT). The tract at residues 241–538 (DHRKLGKELD…LIEEYKGAFP (298 aa)) is catalytic. The Zn(2+) site is built by cysteine 334, histidine 385, and histidine 515.

The protein belongs to the class-II aminoacyl-tRNA synthetase family. As to quaternary structure, homodimer. The cofactor is Zn(2+).

Its subcellular location is the cytoplasm. It carries out the reaction tRNA(Thr) + L-threonine + ATP = L-threonyl-tRNA(Thr) + AMP + diphosphate + H(+). Functionally, catalyzes the attachment of threonine to tRNA(Thr) in a two-step reaction: L-threonine is first activated by ATP to form Thr-AMP and then transferred to the acceptor end of tRNA(Thr). Also edits incorrectly charged L-seryl-tRNA(Thr). The sequence is that of Threonine--tRNA ligase from Listeria monocytogenes serotype 4b (strain CLIP80459).